The sequence spans 413 residues: Phosphopentomutase (413 aa).

6 residues coordinate Mn(2+): aspartate 11, aspartate 306, histidine 311, aspartate 347, histidine 348, and histidine 359.

This sequence belongs to the phosphopentomutase family. Mn(2+) is required as a cofactor.

The protein resides in the cytoplasm. The enzyme catalyses 2-deoxy-alpha-D-ribose 1-phosphate = 2-deoxy-D-ribose 5-phosphate. The catalysed reaction is alpha-D-ribose 1-phosphate = D-ribose 5-phosphate. Its pathway is carbohydrate degradation; 2-deoxy-D-ribose 1-phosphate degradation; D-glyceraldehyde 3-phosphate and acetaldehyde from 2-deoxy-alpha-D-ribose 1-phosphate: step 1/2. Its function is as follows. Isomerase that catalyzes the conversion of deoxy-ribose 1-phosphate (dRib-1-P) and ribose 1-phosphate (Rib-1-P) to deoxy-ribose 5-phosphate (dRib-5-P) and ribose 5-phosphate (Rib-5-P), respectively. This chain is Phosphopentomutase, found in Helicobacter acinonychis (strain Sheeba).